The chain runs to 83 residues: MLPLMAAISSSSLGIGTSSYSPRYTILSSLIVYTLMRKTRAPFLLSSSFFQSFSLYYKSSLLNSMLMLPLLLHIPYYVKHNKL.

This is an uncharacterized protein from Thermoproteus tenax (TTV1).